A 466-amino-acid polypeptide reads, in one-letter code: ATP-dependent protease ATPase subunit HslU (466 aa).

ATP-binding positions include isoleucine 18, 60–65, aspartate 279, glutamate 344, and arginine 416; that span reads GVGKTE.

Belongs to the ClpX chaperone family. HslU subfamily. As to quaternary structure, a double ring-shaped homohexamer of HslV is capped on each side by a ring-shaped HslU homohexamer. The assembly of the HslU/HslV complex is dependent on binding of ATP.

It localises to the cytoplasm. Its function is as follows. ATPase subunit of a proteasome-like degradation complex; this subunit has chaperone activity. The binding of ATP and its subsequent hydrolysis by HslU are essential for unfolding of protein substrates subsequently hydrolyzed by HslV. HslU recognizes the N-terminal part of its protein substrates and unfolds these before they are guided to HslV for hydrolysis. In Lactobacillus acidophilus (strain ATCC 700396 / NCK56 / N2 / NCFM), this protein is ATP-dependent protease ATPase subunit HslU.